Here is a 179-residue protein sequence, read N- to C-terminus: Large ribosomal subunit protein uL5 (179 aa).

The protein belongs to the universal ribosomal protein uL5 family. Part of the 50S ribosomal subunit; part of the 5S rRNA/L5/L18/L25 subcomplex. Contacts the 5S rRNA and the P site tRNA. Forms a bridge to the 30S subunit in the 70S ribosome.

Its function is as follows. This is one of the proteins that bind and probably mediate the attachment of the 5S RNA into the large ribosomal subunit, where it forms part of the central protuberance. In the 70S ribosome it contacts protein S13 of the 30S subunit (bridge B1b), connecting the 2 subunits; this bridge is implicated in subunit movement. Contacts the P site tRNA; the 5S rRNA and some of its associated proteins might help stabilize positioning of ribosome-bound tRNAs. The chain is Large ribosomal subunit protein uL5 from Citrifermentans bemidjiense (strain ATCC BAA-1014 / DSM 16622 / JCM 12645 / Bem) (Geobacter bemidjiensis).